The chain runs to 142 residues: Large ribosomal subunit protein uL13 (142 aa).

The protein belongs to the universal ribosomal protein uL13 family. As to quaternary structure, part of the 50S ribosomal subunit.

Its function is as follows. This protein is one of the early assembly proteins of the 50S ribosomal subunit, although it is not seen to bind rRNA by itself. It is important during the early stages of 50S assembly. The polypeptide is Large ribosomal subunit protein uL13 (Caldicellulosiruptor bescii (strain ATCC BAA-1888 / DSM 6725 / KCTC 15123 / Z-1320) (Anaerocellum thermophilum)).